An 834-amino-acid chain; its full sequence is Periplasmic nitrate reductase (834 aa).

The tat-type signal signal peptide spans 1 to 31 (MTGELTRREMLKAHAAGIAAATAGIALPAAA). The 57-residue stretch at 43–99 (ITWSKAPCRFCGTGCGVMVGVKEGQVVATHGDMQAEVNRGLNCIKGYFLSKIMYGTD) folds into the 4Fe-4S Mo/W bis-MGD-type domain. Positions 50, 53, 57, and 85 each coordinate [4Fe-4S] cluster. Residues K87, Q154, N179, C183, 216–223 (WGSNMAEM), 247–251 (STFTH), 266–268 (GTD), M377, Q381, N487, 513–514 (SD), K536, D563, and 723–732 (TGRVLEHWHS) each bind Mo-bis(molybdopterin guanine dinucleotide). W799 contributes to the substrate binding site. 2 residues coordinate Mo-bis(molybdopterin guanine dinucleotide): N807 and K824.

It belongs to the prokaryotic molybdopterin-containing oxidoreductase family. NasA/NapA/NarB subfamily. As to quaternary structure, component of the periplasmic nitrate reductase NapAB complex composed of NapA and NapB. [4Fe-4S] cluster is required as a cofactor. The cofactor is Mo-bis(molybdopterin guanine dinucleotide). In terms of processing, predicted to be exported by the Tat system. The position of the signal peptide cleavage has not been experimentally proven.

The protein resides in the periplasm. The enzyme catalyses 2 Fe(II)-[cytochrome] + nitrate + 2 H(+) = 2 Fe(III)-[cytochrome] + nitrite + H2O. In terms of biological role, catalytic subunit of the periplasmic nitrate reductase complex NapAB. Receives electrons from NapB and catalyzes the reduction of nitrate to nitrite. The polypeptide is Periplasmic nitrate reductase (Rhizobium meliloti (strain 1021) (Ensifer meliloti)).